A 1850-amino-acid polypeptide reads, in one-letter code: Chitin synthase V (1850 aa).

The interval 1–27 (MASTLPPLGGGNGGPHTQHSLPSLPAH) is disordered. A Myosin motor domain is found at 1–779 (MASTLPPLGG…EIAGLVDGSA (779 aa)). 105–112 (GESGSGKS) lines the ATP pocket. Asparagine 245, asparagine 290, asparagine 427, asparagine 481, and asparagine 558 each carry an N-linked (GlcNAc...) asparagine glycan. The segment at 289–309 (NNTSATGDDSGGFSHEGGQTS) is disordered. Residues 593–647 (SKPMRAPSVMSRKGGRGRGIASQRRQQESNLFDSGNTHAESRSPKGGNKGGIDQG) are disordered. Over residues 620 to 630 (ESNLFDSGNTH) the composition is skewed to polar residues. The interval 656-680 (LDNVQKAVTDPGTNAYFVFCLKPND) is actin-binding. 2 helical membrane-spanning segments follow: residues 884 to 904 (WVFT…RWIG) and 923 to 943 (MLIW…PMLI). Positions 947–1006 (QNVFSAAELSSHNGKDGNSAYVSIRGHVIDLGSFADRHYPSFVSRKTMLNYAGMDVSSLF) constitute a Cytochrome b5 heme-binding domain. N-linked (GlcNAc...) asparagine glycans are attached at residues asparagine 1033, asparagine 1058, and asparagine 1186. The helical transmembrane segment at 1196 to 1216 (LVLAVSILLVSVIAFKFFAAL) threads the bilayer. 2 N-linked (GlcNAc...) asparagine glycosylation sites follow: asparagine 1453 and asparagine 1559. Helical transmembrane passes span 1568 to 1588 (LIPM…VVFI), 1590 to 1610 (LLST…IVLV), 1617 to 1637 (VPIT…IIFI), and 1644 to 1664 (MVGW…GLPL). N-linked (GlcNAc...) asparagine glycosylation occurs at asparagine 1767. The 51-residue stretch at 1800–1850 (LPSDDALLAEIRDILKTADLMTVTKKGIKQELERRFDVPLDAKRAYINSGK) folds into the DEK-C domain.

The protein in the N-terminal section; belongs to the TRAFAC class myosin-kinesin ATPase superfamily. Myosin family. In the C-terminal section; belongs to the chitin synthase family. Class V subfamily. In terms of tissue distribution, expressed in conidia and during appressorium formation.

Its subcellular location is the cell membrane. The protein localises to the cell septum. It is found in the cell tip. It carries out the reaction [(1-&gt;4)-N-acetyl-beta-D-glucosaminyl](n) + UDP-N-acetyl-alpha-D-glucosamine = [(1-&gt;4)-N-acetyl-beta-D-glucosaminyl](n+1) + UDP + H(+). Polymerizes chitin, a structural polymer of the cell wall and septum, by transferring the sugar moiety of UDP-GlcNAc to the non-reducing end of the growing chitin polymer. Contributes to the production of conidia and the ability of fungal conidia to germinate. Involved in the fungal cell wall integrity and the ability of conidia to withstand biophysical pressure. Required for appressorium formation and evasion of insect cellular and/or humoral defenses, promoting the fungal dimorphic transition to the production of hyphal bodies that occurs within hosts, and ultimately to virulence. This Metarhizium acridum (strain CQMa 102) protein is Chitin synthase V.